Here is a 388-residue protein sequence, read N- to C-terminus: D-alanyl-D-alanine carboxypeptidase DacD (388 aa).

The N-terminal stretch at 1–21 is a signal peptide; sequence MKRRLIIAASLFVFNLSSGFA. Residue Ser63 is the Acyl-ester intermediate of the active site. Residue Lys66 is the Proton acceptor of the active site. The active site involves Ser129. Substrate is bound at residue Lys232.

This sequence belongs to the peptidase S11 family.

The protein localises to the cell inner membrane. It carries out the reaction Preferential cleavage: (Ac)2-L-Lys-D-Ala-|-D-Ala. Also transpeptidation of peptidyl-alanyl moieties that are N-acyl substituents of D-alanine.. It functions in the pathway cell wall biogenesis; peptidoglycan biosynthesis. Functionally, removes C-terminal D-alanyl residues from sugar-peptide cell wall precursors. The sequence is that of D-alanyl-D-alanine carboxypeptidase DacD (dacD) from Escherichia coli (strain K12).